The chain runs to 777 residues: Isoamylase (777 aa).

A signal peptide spans 1 to 32; it reads MDPHAPQRQRSGQRLRALALAALACALSPAHA. Positions 162, 263, 264, 266, and 293 each coordinate Ca(2+). Asp410 functions as the Nucleophile in the catalytic mechanism. Cys419 and Cys423 are joined by a disulfide. Glu458 (proton donor) is an active-site residue.

Belongs to the glycosyl hydrolase 13 family. Monomer. Ca(2+) serves as cofactor.

It carries out the reaction Hydrolysis of (1-&gt;6)-alpha-D-glucosidic branch linkages in glycogen, amylopectin and their beta-limit dextrins.. In terms of biological role, has a high rate of hydrolysis for glycogen. Does not cleave pullulan. In Flavobacterium sp, this protein is Isoamylase (iam).